Reading from the N-terminus, the 228-residue chain is Probable septum site-determining protein MinC (228 aa).

The protein belongs to the MinC family. Interacts with MinD and FtsZ.

Functionally, cell division inhibitor that blocks the formation of polar Z ring septums. Rapidly oscillates between the poles of the cell to destabilize FtsZ filaments that have formed before they mature into polar Z rings. Prevents FtsZ polymerization. This Bacillus cereus (strain B4264) protein is Probable septum site-determining protein MinC.